Here is a 206-residue protein sequence, read N- to C-terminus: Cytochrome c oxidase assembly protein CtaG (206 aa).

Residues 1–17 (MPEVQPSALPKPAPRLG) are Cytoplasmic-facing. The chain crosses the membrane as a helical; Signal-anchor for type II membrane protein span at residues 18–40 (RDAAVASICGFVVALMVGASFAA). Over 41–206 (VPFYDWFCRT…GEPDQRKGNL (166 aa)) the chain is Periplasmic.

This sequence belongs to the COX11/CtaG family.

It is found in the cell inner membrane. Its function is as follows. Exerts its effect at some terminal stage of cytochrome c oxidase synthesis, probably by being involved in the insertion of the copper B into subunit I. This is Cytochrome c oxidase assembly protein CtaG from Rhodopseudomonas palustris (strain BisB5).